The following is a 412-amino-acid chain: Early growth response protein 2b (412 aa).

The tract at residues 269–299 (YTPQNLPLRPILRPRKYPNRPSKTPVHERPY) is disordered. C2H2-type zinc fingers lie at residues 299 to 323 (YPCP…IRIH), 329 to 351 (FQCR…IRTH), and 357 to 379 (FACD…TKIH). A disordered region spans residues 371–412 (ERKRHTKIHLRQKERKSSSSSTGVSSSERGVATSICSSSSNQ). Residues 374–384 (RHTKIHLRQKE) are compositionally biased toward basic residues. Residues 388–401 (SSSSTGVSSSERGV) show a composition bias toward low complexity.

The protein belongs to the EGR C2H2-type zinc-finger protein family.

It localises to the nucleus. Functionally, sequence-specific DNA-binding transcription factor. Binds to two specific DNA sites located in the promoter region of HOXA4. This is Early growth response protein 2b (egr2b) from Danio rerio (Zebrafish).